The primary structure comprises 177 residues: Large ribosomal subunit protein uL6 (177 aa).

Belongs to the universal ribosomal protein uL6 family. As to quaternary structure, part of the 50S ribosomal subunit.

Functionally, this protein binds to the 23S rRNA, and is important in its secondary structure. It is located near the subunit interface in the base of the L7/L12 stalk, and near the tRNA binding site of the peptidyltransferase center. The sequence is that of Large ribosomal subunit protein uL6 from Rhizobium etli (strain ATCC 51251 / DSM 11541 / JCM 21823 / NBRC 15573 / CFN 42).